The sequence spans 345 residues: Pyruvate dehydrogenase E1 component subunit alpha (345 aa).

In terms of assembly, heterodimer of an alpha and a beta chain. It depends on thiamine diphosphate as a cofactor.

The enzyme catalyses N(6)-[(R)-lipoyl]-L-lysyl-[protein] + pyruvate + H(+) = N(6)-[(R)-S(8)-acetyldihydrolipoyl]-L-lysyl-[protein] + CO2. Functionally, the pyruvate dehydrogenase complex catalyzes the overall conversion of pyruvate to acetyl-CoA and CO(2). It contains multiple copies of three enzymatic components: pyruvate dehydrogenase (E1), dihydrolipoamide acetyltransferase (E2) and lipoamide dehydrogenase (E3). This is Pyruvate dehydrogenase E1 component subunit alpha (pdhA) from Acholeplasma laidlawii.